Here is a 104-residue protein sequence, read N- to C-terminus: Protein RnfH (104 aa).

It belongs to the UPF0125 (RnfH) family.

The polypeptide is Protein RnfH (Pseudomonas fluorescens (strain Pf0-1)).